Consider the following 533-residue polypeptide: SH3 and F-BAR domain-containing protein DDB_G0271676 (533 aa).

The F-BAR domain maps to R5–D258. The stretch at R76–E186 forms a coiled coil. Composition is skewed to basic and acidic residues over residues L126–S155 and K162–Y184. Disordered stretches follow at residues L126–Y184 and S301–N405. Low complexity-rich tracts occupy residues S318 to Q327, N340 to N360, P372 to N385, and S392 to N405. 2 SH3 domains span residues S406–D468 and V476–I533.

In Dictyostelium discoideum (Social amoeba), this protein is SH3 and F-BAR domain-containing protein DDB_G0271676.